A 416-amino-acid chain; its full sequence is S-adenosylmethionine synthase (416 aa).

His14 is a binding site for ATP. Asp16 is a Mg(2+) binding site. Residue Glu42 participates in K(+) binding. L-methionine-binding residues include Glu55 and Gln98. The interval 98–108 (QSADINQGVDR) is flexible loop. ATP contacts are provided by residues 164–166 (DAK), 240–241 (KF), Asp249, 255–256 (RK), Ala272, and Lys276. Asp249 is a binding site for L-methionine. Lys280 contributes to the L-methionine binding site.

Belongs to the AdoMet synthase family. In terms of assembly, homotetramer; dimer of dimers. It depends on Mg(2+) as a cofactor. Requires K(+) as cofactor.

The protein resides in the cytoplasm. The enzyme catalyses L-methionine + ATP + H2O = S-adenosyl-L-methionine + phosphate + diphosphate. Its pathway is amino-acid biosynthesis; S-adenosyl-L-methionine biosynthesis; S-adenosyl-L-methionine from L-methionine: step 1/1. Functionally, catalyzes the formation of S-adenosylmethionine (AdoMet) from methionine and ATP. The overall synthetic reaction is composed of two sequential steps, AdoMet formation and the subsequent tripolyphosphate hydrolysis which occurs prior to release of AdoMet from the enzyme. The polypeptide is S-adenosylmethionine synthase (Flavobacterium psychrophilum (strain ATCC 49511 / DSM 21280 / CIP 103535 / JIP02/86)).